The primary structure comprises 229 residues: Potassium/proton antiporter CemA (229 aa).

Transmembrane regions (helical) follow at residues 6–26 (AFIP…ISLC), 107–127 (ILHF…SFWG), and 189–209 (ILSG…KYWI).

Belongs to the CemA family.

The protein resides in the plastid. The protein localises to the chloroplast inner membrane. It catalyses the reaction K(+)(in) + H(+)(out) = K(+)(out) + H(+)(in). Contributes to K(+)/H(+) antiport activity by supporting proton efflux to control proton extrusion and homeostasis in chloroplasts in a light-dependent manner to modulate photosynthesis. Prevents excessive induction of non-photochemical quenching (NPQ) under continuous-light conditions. Indirectly promotes efficient inorganic carbon uptake into chloroplasts. This Barbarea verna (Land cress) protein is Potassium/proton antiporter CemA.